The sequence spans 283 residues: Bifunctional protein FolD (283 aa).

NADP(+) contacts are provided by residues 164 to 166 (GRS), Ser-189, and Ile-230.

It belongs to the tetrahydrofolate dehydrogenase/cyclohydrolase family. Homodimer.

The catalysed reaction is (6R)-5,10-methylene-5,6,7,8-tetrahydrofolate + NADP(+) = (6R)-5,10-methenyltetrahydrofolate + NADPH. The enzyme catalyses (6R)-5,10-methenyltetrahydrofolate + H2O = (6R)-10-formyltetrahydrofolate + H(+). It participates in one-carbon metabolism; tetrahydrofolate interconversion. Functionally, catalyzes the oxidation of 5,10-methylenetetrahydrofolate to 5,10-methenyltetrahydrofolate and then the hydrolysis of 5,10-methenyltetrahydrofolate to 10-formyltetrahydrofolate. The chain is Bifunctional protein FolD from Lactobacillus delbrueckii subsp. bulgaricus (strain ATCC BAA-365 / Lb-18).